The sequence spans 238 residues: Fatty acid metabolism regulator protein (238 aa).

The region spanning Lys-6 to Phe-74 is the HTH gntR-type domain. A DNA-binding region (H-T-H motif) is located at residues Glu-34–Gln-53.

In terms of assembly, homodimer.

Its subcellular location is the cytoplasm. In terms of biological role, multifunctional regulator of fatty acid metabolism. This Shewanella putrefaciens (strain CN-32 / ATCC BAA-453) protein is Fatty acid metabolism regulator protein.